Here is a 329-residue protein sequence, read N- to C-terminus: 4-hydroxythreonine-4-phosphate dehydrogenase (329 aa).

Substrate contacts are provided by His136 and Thr137. Positions 166, 211, and 266 each coordinate a divalent metal cation. Residues Lys274, Asn283, and Arg292 each coordinate substrate.

It belongs to the PdxA family. In terms of assembly, homodimer. Zn(2+) is required as a cofactor. Requires Mg(2+) as cofactor. It depends on Co(2+) as a cofactor.

It localises to the cytoplasm. It catalyses the reaction 4-(phosphooxy)-L-threonine + NAD(+) = 3-amino-2-oxopropyl phosphate + CO2 + NADH. Its pathway is cofactor biosynthesis; pyridoxine 5'-phosphate biosynthesis; pyridoxine 5'-phosphate from D-erythrose 4-phosphate: step 4/5. In terms of biological role, catalyzes the NAD(P)-dependent oxidation of 4-(phosphooxy)-L-threonine (HTP) into 2-amino-3-oxo-4-(phosphooxy)butyric acid which spontaneously decarboxylates to form 3-amino-2-oxopropyl phosphate (AHAP). The polypeptide is 4-hydroxythreonine-4-phosphate dehydrogenase (Escherichia coli O139:H28 (strain E24377A / ETEC)).